Here is a 93-residue protein sequence, read N- to C-terminus: Small ribosomal subunit protein uS19 (93 aa).

Belongs to the universal ribosomal protein uS19 family.

Protein S19 forms a complex with S13 that binds strongly to the 16S ribosomal RNA. This chain is Small ribosomal subunit protein uS19, found in Blochmanniella floridana.